Reading from the N-terminus, the 182-residue chain is Adenine phosphoribosyltransferase (182 aa).

This sequence belongs to the purine/pyrimidine phosphoribosyltransferase family. Homodimer.

Its subcellular location is the cytoplasm. The catalysed reaction is AMP + diphosphate = 5-phospho-alpha-D-ribose 1-diphosphate + adenine. The protein operates within purine metabolism; AMP biosynthesis via salvage pathway; AMP from adenine: step 1/1. In terms of biological role, catalyzes a salvage reaction resulting in the formation of AMP, that is energically less costly than de novo synthesis. In Saccharopolyspora erythraea (strain ATCC 11635 / DSM 40517 / JCM 4748 / NBRC 13426 / NCIMB 8594 / NRRL 2338), this protein is Adenine phosphoribosyltransferase.